Consider the following 147-residue polypeptide: Ubiquitin-conjugating enzyme E2 D3 (147 aa).

In terms of domain architecture, UBC core spans 1–147 (MALKRINKEL…SREWTQKYAM (147 aa)). Residues C21 and C107 are joined by a disulfide bond. The active-site Glycyl thioester intermediate is C85.

This sequence belongs to the ubiquitin-conjugating enzyme family. Interacts with SCF (SKP1-CUL1-F-box protein) E3 ubiquitin ligase complex; when Cullin is neddylated, the interaction between the E2 and the SCF complex is strengthened. Interacts with DAPK3. Interacts with BRCA1; the DNA damage checkpoint promotes the association with BRCA1 after ionizing radiation. Interacts non-covalently with ubiquitin. Interacts with E3 ubiquitin-protein ligase CBLC. Interacts with UBTD1. Interacts with RIGI and RNF135; involved in RIGI ubiquitination and activation. Phosphorylated by AURKB.

The protein resides in the cell membrane. It is found in the endosome membrane. The enzyme catalyses S-ubiquitinyl-[E1 ubiquitin-activating enzyme]-L-cysteine + [E2 ubiquitin-conjugating enzyme]-L-cysteine = [E1 ubiquitin-activating enzyme]-L-cysteine + S-ubiquitinyl-[E2 ubiquitin-conjugating enzyme]-L-cysteine.. It carries out the reaction S-ubiquitinyl-[E1 ubiquitin-activating enzyme]-L-cysteine + [acceptor protein]-L-lysine = [E1 ubiquitin-activating enzyme]-L-cysteine + N(6)-monoubiquitinyl-[acceptor protein]-L-lysine.. It participates in protein modification; protein ubiquitination. Accepts ubiquitin from the E1 complex and catalyzes its covalent attachment to other proteins. In vitro catalyzes 'Lys-11'-, as well as 'Lys-48'-linked polyubiquitination. Cooperates with the E2 CDC34 and the SCF(FBXW11) E3 ligase complex for the polyubiquitination of NFKBIA leading to its subsequent proteasomal degradation. Acts as an initiator E2, priming the phosphorylated NFKBIA target at positions 'Lys-21' and/or 'Lys-22' with a monoubiquitin. Ubiquitin chain elongation is then performed by CDC34, building ubiquitin chains from the UBE2D3-primed NFKBIA-linked ubiquitin. Also acts as an initiator E2, in conjunction with RNF8, for the priming of PCNA. Monoubiquitination of PCNA, and its subsequent polyubiquitination, are essential events in the operation of the DNA damage tolerance (DDT) pathway that is activated after DNA damage caused by UV or chemical agents during S-phase. Associates with the BRCA1/BARD1 E3 ligase complex to perform ubiquitination at DNA damage sites following ionizing radiation leading to DNA repair. Targets DAPK3 for ubiquitination which influences promyelocytic leukemia protein nuclear body (PML-NB) formation in the nucleus. In conjunction with the MDM2 and TOPORS E3 ligases, functions ubiquitination of p53/TP53. In conjunction with the CBL E3 ligase, targets EGFR for polyubiquitination at the plasma membrane as well as during its internalization and transport on endosomes. In conjunction with the STUB1 E3 quality control E3 ligase, ubiquitinates unfolded proteins to catalyze their immediate destruction. Together with RNF135, catalyzes the viral RNA-dependent 'Lys-63'-linked polyubiquitination of RIGI to activate the downstream signaling pathway that leads to interferon beta production. Together with ZNF598, catalyzes ubiquitination of 40S ribosomal proteins in response to ribosome collisions. In cooperation with the GATOR2 complex, catalyzes 'Lys-6'-linked ubiquitination of NPRL2. This Homo sapiens (Human) protein is Ubiquitin-conjugating enzyme E2 D3 (UBE2D3).